Consider the following 395-residue polypeptide: S-adenosylmethionine synthase (395 aa).

Residue H16 coordinates ATP. Mg(2+) is bound at residue D18. E44 provides a ligand contact to K(+). E57 and Q100 together coordinate L-methionine. Residues Q100–R110 form a flexible loop region. ATP-binding positions include D167–K169, R233–F234, D242, R248–K249, A265, and K269. Residue D242 participates in L-methionine binding. K273 provides a ligand contact to L-methionine.

This sequence belongs to the AdoMet synthase family. Homotetramer; dimer of dimers. It depends on Mg(2+) as a cofactor. The cofactor is K(+).

It is found in the cytoplasm. The catalysed reaction is L-methionine + ATP + H2O = S-adenosyl-L-methionine + phosphate + diphosphate. The protein operates within amino-acid biosynthesis; S-adenosyl-L-methionine biosynthesis; S-adenosyl-L-methionine from L-methionine: step 1/1. Catalyzes the formation of S-adenosylmethionine (AdoMet) from methionine and ATP. The overall synthetic reaction is composed of two sequential steps, AdoMet formation and the subsequent tripolyphosphate hydrolysis which occurs prior to release of AdoMet from the enzyme. This chain is S-adenosylmethionine synthase, found in Burkholderia lata (strain ATCC 17760 / DSM 23089 / LMG 22485 / NCIMB 9086 / R18194 / 383).